Consider the following 856-residue polypeptide: MRVEGIQRNWKQWWIWGILGFWMVMIYNVRGNLWVTVYYGVPVWKEAKTTLFCASDAKAYDAEVHNVWATHACVPTDPNPQEMVLENVTENFNMWENDMVEQMHQDIISLWDQSLKPCVKLTPLCVTLHCSNRTIDYNNRTDNMGGEIKNCSFNMTTEVRDKREKVHALFYRLDIVPLKNESSNTSGDYRLINCNTSAITQACPKVSFDPIPIHYCAPAGYAILKCNNKTFNGTGPCNNVSTIQCTHGTKPVVSTQLLLNGSLAEEEIIIRSKNLTDNVKTIIVHLNESVEINCTRPNNNTRKSIRIGPGQAFYATGEIIGDIRQAHCNISRTAWNKTLQEVGKKLAEHFPNKAIKFAKHSGGDLEITTHSFNCRGEFFYCNTSSLFNSTYTPNSTENITGTENSIITIPCRIKQIINMWQGVGRAMYAPPIEGILTCRSNITGLLLTRDGGTGMHDTEIFRPEGGDMRDNWRSELYKYKVVEIKPLGIAPTKAKRRVVEREKRAVGIGAVFLGFLGAAGSTMGAASITLTVQVRQLLSGIVQQQSNLLRAIEAQQHMLQLTVWGIKQLQTRVLAIERYLRDQQLLGIWGCSGKLICTTAVPWNSSWSNRSQEDIWNNMTWMQWDREISNYTNTIYRLLEDSQNQQEKNEQDLLALDKWQNLWTWFGITNWLWYIKIFIKIVGGLIGLRIIFAVLSIVNRVRQGYSPLSFQTLTPNPRGPDRLGGIEEEGGEQDRDRSIRLVSGFLALAWDDLRSLCLFSYHRLRDLILIAARAVELLGRSSLRGIQRGWEILKYLGGLVQYWSLELKKSAISLFDTIAIAVAEGTDRIIEVIQGIWRAICNIPRRIRQGFEAALQ.

Residues 1-31 form the signal peptide; sequence MRVEGIQRNWKQWWIWGILGFWMVMIYNVRG. Over 32–677 the chain is Extracellular; it reads NLWVTVYYGV…ITNWLWYIKI (646 aa). An intrachain disulfide couples C53 to C73. N-linked (GlcNAc...) asparagine; by host glycosylation is found at N87, N132, N139, N150, N154, N180, N184, N195, N228, N232, N239, N260, N274, N287, N293, N299, N329, and N336. Cystine bridges form between C118/C203, C125/C194, C130/C151, C216/C245, and C226/C237. Positions 130 to 150 are V1; that stretch reads CSNRTIDYNNRTDNMGGEIKN. The segment at 151 to 194 is V2; it reads CSFNMTTEVRDKREKVHALFYRLDIVPLKNESSNTSGDYRLINC. Residues 294–327 are V3; it reads CTRPNNNTRKSIRIGPGQAFYATGEIIGDIRQAH. The cysteines at positions 294 and 328 are disulfide-linked. Residues 360–370 form a CD4-binding loop region; the sequence is HSGGDLEITTH. 2 disulfide bridges follow: C374/C438 and C381/C411. Positions 381 to 411 are V4; the sequence is CNTSSLFNSTYTPNSTENITGTENSIITIPC. 5 N-linked (GlcNAc...) asparagine; by host glycosylation sites follow: N382, N388, N394, N398, and N441. 2 V5 regions span residues 454-464 and 456-464; these read GMHDTEIFRPE and HDTEIFRPE. The segment at 505–525 is fusion peptide; sequence AVGIGAVFLGFLGAAGSTMGA. The segment at 567-585 is immunosuppression; sequence KQLQTRVLAIERYLRDQQL. A disulfide bridge connects residues C591 and C597. N604, N609, N618, and N630 each carry an N-linked (GlcNAc...) asparagine; by host glycan. Positions 626–660 form a coiled coil; it reads REISNYTNTIYRLLEDSQNQQEKNEQDLLALDKWQ. The interval 655–676 is MPER; binding to GalCer; that stretch reads ALDKWQNLWTWFGITNWLWYIK. The chain crosses the membrane as a helical span at residues 678-698; it reads FIKIVGGLIGLRIIFAVLSIV. Residues 699 to 856 are Cytoplasmic-facing; it reads NRVRQGYSPL…IRQGFEAALQ (158 aa). The YXXL motif; contains endocytosis signal signature appears at 705-708; sequence YSPL. Positions 712–732 are disordered; it reads TLTPNPRGPDRLGGIEEEGGE. Residue C757 is the site of S-palmitoyl cysteine; by host attachment.

The protein belongs to the HIV-1 env protein family. As to quaternary structure, the mature envelope protein (Env) consists of a homotrimer of non-covalently associated gp120-gp41 heterodimers. The resulting complex protrudes from the virus surface as a spike. There seems to be as few as 10 spikes on the average virion. Interacts with host CD4, CCR5 and CXCR4. Gp120 also interacts with the C-type lectins CD209/DC-SIGN and CLEC4M/DC-SIGNR (collectively referred to as DC-SIGN(R)). Gp120 and gp41 interact with GalCer. Gp120 interacts with host ITGA4/ITGB7 complex; on CD4+ T-cells, this interaction results in rapid activation of integrin ITGAL/LFA-1, which facilitates efficient cell-to-cell spreading of HIV-1. Gp120 interacts with cell-associated heparan sulfate; this interaction increases virus infectivity on permissive cells and may be involved in infection of CD4- cells. The mature envelope protein (Env) consists of a homotrimer of non-covalently associated gp120-gp41 heterodimers. The resulting complex protrudes from the virus surface as a spike. There seems to be as few as 10 spikes on the average virion. Post-translationally, highly glycosylated by host. The high number of glycan on the protein is reffered to as 'glycan shield' because it contributes to hide protein sequence from adaptive immune system. Palmitoylation of the transmembrane protein and of Env polyprotein (prior to its proteolytic cleavage) is essential for their association with host cell membrane lipid rafts. Palmitoylation is therefore required for envelope trafficking to classical lipid rafts, but not for viral replication. In terms of processing, specific enzymatic cleavages in vivo yield mature proteins. Envelope glycoproteins are synthesized as an inactive precursor that is heavily N-glycosylated and processed likely by host cell furin in the Golgi to yield the mature SU and TM proteins. The cleavage site between SU and TM requires the minimal sequence [KR]-X-[KR]-R. About 2 of the 9 disulfide bonds of gp41 are reduced by P4HB/PDI, following binding to CD4 receptor.

The protein resides in the virion membrane. Its subcellular location is the host cell membrane. The protein localises to the host endosome membrane. In terms of biological role, oligomerizes in the host endoplasmic reticulum into predominantly trimers. In a second time, gp160 transits in the host Golgi, where glycosylation is completed. The precursor is then proteolytically cleaved in the trans-Golgi and thereby activated by cellular furin or furin-like proteases to produce gp120 and gp41. Its function is as follows. Attaches the virus to the host lymphoid cell by binding to the primary receptor CD4. This interaction induces a structural rearrangement creating a high affinity binding site for a chemokine coreceptor like CXCR4 and/or CCR5. Acts as a ligand for CD209/DC-SIGN and CLEC4M/DC-SIGNR, which are respectively found on dendritic cells (DCs), and on endothelial cells of liver sinusoids and lymph node sinuses. These interactions allow capture of viral particles at mucosal surfaces by these cells and subsequent transmission to permissive cells. HIV subverts the migration properties of dendritic cells to gain access to CD4+ T-cells in lymph nodes. Virus transmission to permissive T-cells occurs either in trans (without DCs infection, through viral capture and transmission), or in cis (following DCs productive infection, through the usual CD4-gp120 interaction), thereby inducing a robust infection. In trans infection, bound virions remain infectious over days and it is proposed that they are not degraded, but protected in non-lysosomal acidic organelles within the DCs close to the cell membrane thus contributing to the viral infectious potential during DCs' migration from the periphery to the lymphoid tissues. On arrival at lymphoid tissues, intact virions recycle back to DCs' cell surface allowing virus transmission to CD4+ T-cells. Acts as a class I viral fusion protein. Under the current model, the protein has at least 3 conformational states: pre-fusion native state, pre-hairpin intermediate state, and post-fusion hairpin state. During fusion of viral and target intracellular membranes, the coiled coil regions (heptad repeats) assume a trimer-of-hairpins structure, positioning the fusion peptide in close proximity to the C-terminal region of the ectodomain. The formation of this structure appears to drive apposition and subsequent fusion of viral and target cell membranes. Complete fusion occurs in host cell endosomes and is dynamin-dependent, however some lipid transfer might occur at the plasma membrane. The virus undergoes clathrin-dependent internalization long before endosomal fusion, thus minimizing the surface exposure of conserved viral epitopes during fusion and reducing the efficacy of inhibitors targeting these epitopes. Membranes fusion leads to delivery of the nucleocapsid into the cytoplasm. This is Envelope glycoprotein gp160 from Homo sapiens (Human).